The following is a 246-amino-acid chain: MAAPGPALCLFDVDGTLTAPRQKITKEMDDFLQKLRQKIKIGVVGGSDFEKVQEQLGNDVVEKYDYVFPENGLVAYKDGKLLCKQNIQSHLGEALIQDLINYCLSYIAKVKLPKKRGTFIEFRNGMLNVSPIGRSCSQEERIEFYELDKKENIRQKFVADLRKEFAGKGLTFSIGGQISFDVFPDGWDKRYCLRHVENDGYKTIYFFGDKTMPGGNDHEIFTDPRTVGYSVTAPEDTRRICEELFS.

Position 2 is an N-acetylalanine (A2). D12 (nucleophile) is an active-site residue. 2 residues coordinate Mg(2+): D12 and D14. Catalysis depends on D14, which acts as the Proton donor/acceptor. Residues R21, R123, R134, and R141 each contribute to the alpha-D-mannose 1-phosphate site. K149 is modified (N6-acetyllysine). Positions 179 and 181 each coordinate alpha-D-mannose 1-phosphate. Mg(2+) contacts are provided by D209, F221, D223, and T226.

This sequence belongs to the eukaryotic PMM family. Homodimer.

The protein localises to the cytoplasm. It catalyses the reaction alpha-D-mannose 1-phosphate = D-mannose 6-phosphate. The protein operates within nucleotide-sugar biosynthesis; GDP-alpha-D-mannose biosynthesis; alpha-D-mannose 1-phosphate from D-fructose 6-phosphate: step 2/2. Its function is as follows. Involved in the synthesis of the GDP-mannose and dolichol-phosphate-mannose required for a number of critical mannosyl transfer reactions. This chain is Phosphomannomutase 2 (PMM2), found in Macaca fascicularis (Crab-eating macaque).